Here is a 227-residue protein sequence, read N- to C-terminus: uncharacterized protein (227 aa).

Position 17-24 (17-24 (GKTGCGKT)) interacts with ATP.

This is an uncharacterized protein from Methanocaldococcus jannaschii (strain ATCC 43067 / DSM 2661 / JAL-1 / JCM 10045 / NBRC 100440) (Methanococcus jannaschii).